The chain runs to 348 residues: Xaa-Pro dipeptidase (348 aa).

The Co(2+) site is built by Asp209, Asp220, His284, Glu313, and Glu327.

Belongs to the peptidase M24B family. Archaeal-type prolidase subfamily. In terms of assembly, homodimer. The cofactor is Co(2+). Mn(2+) serves as cofactor.

Its subcellular location is the cytoplasm. It catalyses the reaction Xaa-L-Pro dipeptide + H2O = an L-alpha-amino acid + L-proline. In terms of biological role, splits dipeptides with a prolyl in the C-terminal position and a nonpolar amino acid at the N-terminal position. The polypeptide is Xaa-Pro dipeptidase (pepQ) (Pyrococcus furiosus (strain ATCC 43587 / DSM 3638 / JCM 8422 / Vc1)).